The sequence spans 402 residues: Homoserine O-acetyltransferase (402 aa).

The segment covering 1–17 (MDWQTTSADTAPSSFIT) has biased composition (polar residues). The segment at 1–39 (MDWQTTSADTAPSSFITEEQDRSLFGKPPASGAWKESDP) is disordered. In terms of domain architecture, AB hydrolase-1 spans 78-388 (NAVLVLHALT…HFGHDGFLIE (311 aa)). Residue serine 183 is the Nucleophile of the active site. Arginine 255 serves as a coordination point for substrate. Catalysis depends on residues aspartate 349 and histidine 382. Aspartate 383 lines the substrate pocket.

Belongs to the AB hydrolase superfamily. MetX family. Homodimer.

It localises to the cytoplasm. The enzyme catalyses L-homoserine + acetyl-CoA = O-acetyl-L-homoserine + CoA. The protein operates within amino-acid biosynthesis; L-methionine biosynthesis via de novo pathway; O-acetyl-L-homoserine from L-homoserine: step 1/1. Transfers an acetyl group from acetyl-CoA to L-homoserine, forming acetyl-L-homoserine. This Leifsonia xyli subsp. xyli (strain CTCB07) protein is Homoserine O-acetyltransferase.